The primary structure comprises 198 residues: Na(+)-translocating NADH-quinone reductase subunit E (198 aa).

6 helical membrane-spanning segments follow: residues 11–31 (SVFIENMALSFFLGMCTFLAV), 35–55 (VSTAFGLGIAVIVVLGIAVPV), 77–97 (FLNFITFIGVIAALVQILEMV), 110–130 (GIFLPLITVNCAIFGGVSFMV), 140–160 (VVYGIGAGTGWMLAIVALAGI), and 176–196 (LGITFITVGLMALGFMSFSGI).

This sequence belongs to the NqrDE/RnfAE family. As to quaternary structure, composed of six subunits; NqrA, NqrB, NqrC, NqrD, NqrE and NqrF.

The protein resides in the cell inner membrane. The enzyme catalyses a ubiquinone + n Na(+)(in) + NADH + H(+) = a ubiquinol + n Na(+)(out) + NAD(+). NQR complex catalyzes the reduction of ubiquinone-1 to ubiquinol by two successive reactions, coupled with the transport of Na(+) ions from the cytoplasm to the periplasm. NqrA to NqrE are probably involved in the second step, the conversion of ubisemiquinone to ubiquinol. This Pasteurella multocida (strain Pm70) protein is Na(+)-translocating NADH-quinone reductase subunit E.